The primary structure comprises 298 residues: Tyrosine recombinase XerC (298 aa).

Residues 1–85 (MKPIAAFQEY…SLRSFYRYLT (85 aa)) enclose the Core-binding (CB) domain. Residues 106 to 291 (HLPQFFYEAE…TMAHLKNEYM (186 aa)) form the Tyr recombinase domain. Catalysis depends on residues Arg146, Lys170, His243, Arg246, and His269. Catalysis depends on Tyr278, which acts as the O-(3'-phospho-DNA)-tyrosine intermediate.

Belongs to the 'phage' integrase family. XerC subfamily. As to quaternary structure, forms a cyclic heterotetrameric complex composed of two molecules of XerC and two molecules of XerD.

It is found in the cytoplasm. In terms of biological role, site-specific tyrosine recombinase, which acts by catalyzing the cutting and rejoining of the recombining DNA molecules. The XerC-XerD complex is essential to convert dimers of the bacterial chromosome into monomers to permit their segregation at cell division. It also contributes to the segregational stability of plasmids. The protein is Tyrosine recombinase XerC of Lacticaseibacillus paracasei (strain ATCC 334 / BCRC 17002 / CCUG 31169 / CIP 107868 / KCTC 3260 / NRRL B-441) (Lactobacillus paracasei).